Reading from the N-terminus, the 435-residue chain is Serine carboxypeptidase-like 14 (435 aa).

A signal peptide spans 1–23; the sequence is MGSWIPKLLLLQLVLLLTKHADS. 3 cysteine pairs are disulfide-bonded: Cys-82/Cys-325, Cys-246/Cys-260, and Cys-284/Cys-291. Asn-103 is a glycosylation site (N-linked (GlcNAc...) asparagine). Ser-178 is an active-site residue. The N-linked (GlcNAc...) asparagine glycan is linked to Asn-344. Asp-360 is an active-site residue. An N-linked (GlcNAc...) asparagine glycan is attached at Asn-376. The active site involves His-413.

This sequence belongs to the peptidase S10 family. As to expression, expressed in senescent leaves.

It is found in the secreted. In terms of biological role, probable carboxypeptidase. This is Serine carboxypeptidase-like 14 (SCPL14) from Arabidopsis thaliana (Mouse-ear cress).